Reading from the N-terminus, the 471-residue chain is Adenosylhomocysteinase (471 aa).

Substrate contacts are provided by threonine 60, aspartate 135, and glutamate 196. Threonine 197–threonine 199 is a binding site for NAD(+). Lysine 226 and aspartate 230 together coordinate substrate. NAD(+) is bound by residues asparagine 231, glycine 260–glycine 265, glutamate 283, asparagine 318, isoleucine 339–histidine 341, and asparagine 387.

Belongs to the adenosylhomocysteinase family. Requires NAD(+) as cofactor.

The protein localises to the cytoplasm. It carries out the reaction S-adenosyl-L-homocysteine + H2O = L-homocysteine + adenosine. It functions in the pathway amino-acid biosynthesis; L-homocysteine biosynthesis; L-homocysteine from S-adenosyl-L-homocysteine: step 1/1. In terms of biological role, may play a key role in the regulation of the intracellular concentration of adenosylhomocysteine. This Chlorobium luteolum (strain DSM 273 / BCRC 81028 / 2530) (Pelodictyon luteolum) protein is Adenosylhomocysteinase.